The sequence spans 624 residues: Laccase-1 (624 aa).

The first 20 residues, 1-20 (MRGLAKLFFLSCSFVSLVSS), serve as a signal peptide directing secretion. 2 Plastocyanin-like domains span residues 72–183 (FASP…HSPN) and 195–343 (DRIV…CMFG). His117 and His119 together coordinate Cu cation. Cys138 and Cys578 are disulfide-bonded. Asn149 carries N-linked (GlcNAc...) asparagine glycosylation. Residues His162 and His164 each contribute to the Cu cation site. Asn242 and Asn430 each carry an N-linked (GlcNAc...) asparagine glycan. Residues 469-562 (IIINNLDTVI…GKLAVIVVQP (94 aa)) enclose the Plastocyanin-like 3 domain. 3 residues coordinate Cu cation: His480, His483, and His485. An N-linked (GlcNAc...) asparagine glycan is attached at Asn503. Residues His543, Cys544, His545, and His549 each coordinate Cu cation. Residues 579–604 (ANTDPNAFGPAKRSSSPSIQSSKTSS) are disordered. A compositionally biased stretch (low complexity) spans 592-604 (SSSPSIQSSKTSS).

It belongs to the multicopper oxidase family. Requires Cu cation as cofactor.

It is found in the secreted. It localises to the cell wall. It catalyses the reaction 4 hydroquinone + O2 = 4 benzosemiquinone + 2 H2O. Laccase that catalyzes the oxidation of certain aromatic compounds, including L-dopa, to quinones, which then polymerize to melanin. Able to oxidize a wide variety of aromatic diphenol and diamino groups in the ortho, meta, and para positions but not monophenolic groups such as in phenol, tyramine, or tyrosine. Plays an important role in virulence. Plays a role in dissemination to extrapulmonary sites but is not involved in pulmonary growth or in elicitation of cellular immune responses in the lung. The protein is Laccase-1 of Cryptococcus neoformans var. neoformans serotype D (strain B-3501A) (Filobasidiella neoformans).